A 513-amino-acid polypeptide reads, in one-letter code: ATP synthase subunit alpha (513 aa).

ATP is bound at residue Gly169–Thr176.

It belongs to the ATPase alpha/beta chains family. As to quaternary structure, F-type ATPases have 2 components, CF(1) - the catalytic core - and CF(0) - the membrane proton channel. CF(1) has five subunits: alpha(3), beta(3), gamma(1), delta(1), epsilon(1). CF(0) has three main subunits: a(1), b(2) and c(9-12). The alpha and beta chains form an alternating ring which encloses part of the gamma chain. CF(1) is attached to CF(0) by a central stalk formed by the gamma and epsilon chains, while a peripheral stalk is formed by the delta and b chains.

It localises to the cell inner membrane. The enzyme catalyses ATP + H2O + 4 H(+)(in) = ADP + phosphate + 5 H(+)(out). Produces ATP from ADP in the presence of a proton gradient across the membrane. The alpha chain is a regulatory subunit. The protein is ATP synthase subunit alpha of Shigella boydii serotype 18 (strain CDC 3083-94 / BS512).